The primary structure comprises 239 residues: Uridylate kinase (239 aa).

10–13 is a binding site for ATP; sequence KFSG. The interval 18-23 is involved in allosteric activation by GTP; sequence GENGFG. Glycine 52 is a binding site for UMP. Positions 53 and 57 each coordinate ATP. UMP-binding positions include aspartate 73 and 134–141; that span reads TGNPYFTT. ATP contacts are provided by threonine 161, tyrosine 167, and aspartate 170.

Belongs to the UMP kinase family. In terms of assembly, homohexamer.

Its subcellular location is the cytoplasm. It carries out the reaction UMP + ATP = UDP + ADP. It participates in pyrimidine metabolism; CTP biosynthesis via de novo pathway; UDP from UMP (UMPK route): step 1/1. Allosterically activated by GTP. Inhibited by UTP. Functionally, catalyzes the reversible phosphorylation of UMP to UDP. This is Uridylate kinase from Campylobacter jejuni subsp. jejuni serotype O:2 (strain ATCC 700819 / NCTC 11168).